The primary structure comprises 157 residues: S-ribosylhomocysteine lyase (157 aa).

Residues His-54, His-58, and Cys-126 each contribute to the Fe cation site.

It belongs to the LuxS family. Homodimer. It depends on Fe cation as a cofactor.

It catalyses the reaction S-(5-deoxy-D-ribos-5-yl)-L-homocysteine = (S)-4,5-dihydroxypentane-2,3-dione + L-homocysteine. Its function is as follows. Involved in the synthesis of autoinducer 2 (AI-2) which is secreted by bacteria and is used to communicate both the cell density and the metabolic potential of the environment. The regulation of gene expression in response to changes in cell density is called quorum sensing. Catalyzes the transformation of S-ribosylhomocysteine (RHC) to homocysteine (HC) and 4,5-dihydroxy-2,3-pentadione (DPD). In Bacillus licheniformis (strain ATCC 14580 / DSM 13 / JCM 2505 / CCUG 7422 / NBRC 12200 / NCIMB 9375 / NCTC 10341 / NRRL NRS-1264 / Gibson 46), this protein is S-ribosylhomocysteine lyase.